The sequence spans 184 residues: Large ribosomal subunit protein uL6 (184 aa).

Belongs to the universal ribosomal protein uL6 family. Part of the 50S ribosomal subunit.

This protein binds to the 23S rRNA, and is important in its secondary structure. It is located near the subunit interface in the base of the L7/L12 stalk, and near the tRNA binding site of the peptidyltransferase center. The polypeptide is Large ribosomal subunit protein uL6 (Thermotoga neapolitana (strain ATCC 49049 / DSM 4359 / NBRC 107923 / NS-E)).